The following is a 458-amino-acid chain: Argininosuccinate lyase (458 aa).

Belongs to the lyase 1 family. Argininosuccinate lyase subfamily.

Its subcellular location is the cytoplasm. It catalyses the reaction 2-(N(omega)-L-arginino)succinate = fumarate + L-arginine. Its pathway is amino-acid biosynthesis; L-arginine biosynthesis; L-arginine from L-ornithine and carbamoyl phosphate: step 3/3. The polypeptide is Argininosuccinate lyase (Salmonella dublin (strain CT_02021853)).